Here is a 215-residue protein sequence, read N- to C-terminus: Probable phosphoglycerate mutase GpmB (215 aa).

Substrate contacts are provided by residues 8 to 15 (RHGETLWN), 21 to 22 (QG), Arg-58, Arg-60, 82 to 85 (ELNM), and 151 to 152 (GM). The active-site Tele-phosphohistidine intermediate is His-9. The Proton donor/acceptor role is filled by Glu-82.

The protein belongs to the phosphoglycerate mutase family. GpmB subfamily.

The enzyme catalyses (2R)-2-phosphoglycerate = (2R)-3-phosphoglycerate. It participates in carbohydrate degradation; glycolysis; pyruvate from D-glyceraldehyde 3-phosphate: step 3/5. The chain is Probable phosphoglycerate mutase GpmB from Erwinia tasmaniensis (strain DSM 17950 / CFBP 7177 / CIP 109463 / NCPPB 4357 / Et1/99).